The chain runs to 145 residues: Large ribosomal subunit protein uL13 (145 aa).

The segment at 72 to 91 (DKMYHRHSNHPGGLKSISAG) is disordered.

This sequence belongs to the universal ribosomal protein uL13 family. As to quaternary structure, part of the 50S ribosomal subunit.

In terms of biological role, this protein is one of the early assembly proteins of the 50S ribosomal subunit, although it is not seen to bind rRNA by itself. It is important during the early stages of 50S assembly. This chain is Large ribosomal subunit protein uL13, found in Staphylococcus epidermidis (strain ATCC 12228 / FDA PCI 1200).